The sequence spans 203 residues: GTP cyclohydrolase-2 (203 aa).

49–53 provides a ligand contact to GTP; that stretch reads RIHSE. 3 residues coordinate Zn(2+): cysteine 54, cysteine 65, and cysteine 67. GTP contacts are provided by residues glutamine 70, 92–94, and threonine 114; that span reads EGR. Aspartate 126 functions as the Proton acceptor in the catalytic mechanism. Arginine 128 serves as the catalytic Nucleophile. Residues threonine 149 and lysine 154 each contribute to the GTP site.

This sequence belongs to the GTP cyclohydrolase II family. The cofactor is Zn(2+).

It carries out the reaction GTP + 4 H2O = 2,5-diamino-6-hydroxy-4-(5-phosphoribosylamino)-pyrimidine + formate + 2 phosphate + 3 H(+). Its pathway is cofactor biosynthesis; riboflavin biosynthesis; 5-amino-6-(D-ribitylamino)uracil from GTP: step 1/4. Functionally, catalyzes the conversion of GTP to 2,5-diamino-6-ribosylamino-4(3H)-pyrimidinone 5'-phosphate (DARP), formate and pyrophosphate. This is GTP cyclohydrolase-2 from Shewanella oneidensis (strain ATCC 700550 / JCM 31522 / CIP 106686 / LMG 19005 / NCIMB 14063 / MR-1).